Here is a 530-residue protein sequence, read N- to C-terminus: CTP synthase (530 aa).

Residues 1–264 (MPKLIIVTGG…GDFLTRRLRL (264 aa)) are amidoligase domain. S13 provides a ligand contact to CTP. A UTP-binding site is contributed by S13. 14–19 (GVGKGV) provides a ligand contact to ATP. Residue Y54 coordinates L-glutamine. Residue D71 coordinates ATP. 2 residues coordinate Mg(2+): D71 and E139. CTP is bound by residues 146 to 148 (DYE), 185 to 190 (KTKPLQ), and K221. UTP-binding positions include 185–190 (KTKPLQ) and K221. Positions 289-530 (SVGMCGKYVE…LLKAALFAKR (242 aa)) constitute a Glutamine amidotransferase type-1 domain. G351 serves as a coordination point for L-glutamine. C378 functions as the Nucleophile; for glutamine hydrolysis in the catalytic mechanism. L-glutamine contacts are provided by residues 379–382 (FGMQ), E402, and R459. Active-site residues include H504 and E506.

Belongs to the CTP synthase family. Homotetramer.

The enzyme catalyses UTP + L-glutamine + ATP + H2O = CTP + L-glutamate + ADP + phosphate + 2 H(+). It carries out the reaction L-glutamine + H2O = L-glutamate + NH4(+). The catalysed reaction is UTP + NH4(+) + ATP = CTP + ADP + phosphate + 2 H(+). The protein operates within pyrimidine metabolism; CTP biosynthesis via de novo pathway; CTP from UDP: step 2/2. With respect to regulation, allosterically activated by GTP, when glutamine is the substrate; GTP has no effect on the reaction when ammonia is the substrate. The allosteric effector GTP functions by stabilizing the protein conformation that binds the tetrahedral intermediate(s) formed during glutamine hydrolysis. Inhibited by the product CTP, via allosteric rather than competitive inhibition. Functionally, catalyzes the ATP-dependent amination of UTP to CTP with either L-glutamine or ammonia as the source of nitrogen. Regulates intracellular CTP levels through interactions with the four ribonucleotide triphosphates. In Pyrobaculum aerophilum (strain ATCC 51768 / DSM 7523 / JCM 9630 / CIP 104966 / NBRC 100827 / IM2), this protein is CTP synthase.